The following is a 353-amino-acid chain: Forkhead box protein I3-A (353 aa).

Residues 116–210 constitute a DNA-binding region (fork-head); the sequence is RPPYSYSALI…DNGNFRRKRK (95 aa). The interval 201 to 255 is disordered; the sequence is DNGNFRRKRKRKSDSLAEEEGKGYSGSDSALSSPKNPSDSSERGNSPISTDQAPC. The Nuclear localization signal motif lies at 206–212; the sequence is RRKRKRK. The segment covering 213–222 has biased composition (basic and acidic residues); that stretch reads SDSLAEEEGK. Residues 226–252 show a composition bias toward polar residues; the sequence is GSDSALSSPKNPSDSSERGNSPISTDQ.

In terms of tissue distribution, expressed in ionocyte precursors.

The protein localises to the nucleus. Its function is as follows. Transcription factor required for epithelial cell differentiation. Involved in specification of skin ionocytes from epidermal precursors. The chain is Forkhead box protein I3-A from Danio rerio (Zebrafish).